Reading from the N-terminus, the 266-residue chain is Large ribosomal subunit protein uL2c (266 aa).

The disordered stretch occupies residues 1 to 24 (MAIHLYKTSTPSTRNGTVDSQVKS). Polar residues predominate over residues 7-24 (KTSTPSTRNGTVDSQVKS).

Belongs to the universal ribosomal protein uL2 family. As to quaternary structure, part of the 50S ribosomal subunit.

It is found in the plastid. The protein resides in the chloroplast. This chain is Large ribosomal subunit protein uL2c (rpl2), found in Nicotiana debneyi (Debney's tobacco).